We begin with the raw amino-acid sequence, 314 residues long: FHA domain-containing protein DDL (314 aa).

Over residues 1–10 (MAPSSRSPSP) the composition is skewed to low complexity. Residues 1–146 (MAPSSRSPSP…NVEEDSVARM (146 aa)) are disordered. Positions 18-127 (ARGEKEIGRS…AIASRHDEGS (110 aa)) are enriched in basic and acidic residues. S133 carries the phosphoserine modification. Residues 219 to 282 (YLFGRERRIA…NKTYINESPI (64 aa)) form the FHA domain.

In terms of assembly, interacts with DCL1 (via N-terminus). As to expression, expressed in roots, lateral roots, vascular strands of roots and leaves, vegetative meristems, pollen and developing seeds.

The protein localises to the nucleus. Involved in the microRNA (miRNA) and short interfering RNA (siRNA) biogenesis. May facilitate DCL1 to access or recognize primary miRNAs. Binds RNA non-specifically. The polypeptide is FHA domain-containing protein DDL (DDL) (Arabidopsis thaliana (Mouse-ear cress)).